Consider the following 421-residue polypeptide: Hydrolyase poxO (421 aa).

S239 functions as the Nucleophile in the catalytic mechanism.

The protein belongs to the AB hydrolase superfamily. FUS2 hydrolase family. In terms of assembly, homodimer.

It functions in the pathway secondary metabolite biosynthesis. In terms of biological role, hydrolyase; part of the gene cluster that mediates the biosynthesis of oxaleimides, cytotoxic compounds containing an unusual disubstituted succinimide moiety. The first step of the pathway is provided by the HR-PKS poxF that serves in a new mode of collaborative biosynthesis with the PKS-NRPS poxE, by providing the olefin containing amino acid substrate via the synthesis of an ACP-bound dec-4-enoate. The cytochrome P450 monooxygenase poxM-catalyzed oxidation at the alpha-position creates the enzyme-bound 2-hydroxydec-4-enoyl-ACP thioester, which may be prone to spontaneous hydrolysis to yield 2-hydroxydec-4-enoic acid due to increased electrophilicity of the carbonyl. 2-hydroxydec-4-enoic acid can then be further oxidized by poxM to yield the alpha-ketoacid 2-oxodec-4-enoicacid, which is reductively aminated by the aminotransferase poxL to yield (S,E)-2-aminodec-4-enoic acid. The Hybrid PKS-NRPS synthetase poxE then performs condensation between the octaketide product of its PKS modules and the amino group of (S,E)-2-aminodec-4-enoic acid which is activated and incorporated by the adenylation domain. The resulting aminoacyl product can be cyclized by the Diels-Alderase PoxQ and reductively released by the reductive (R) domain of poxE to yield an aldehyde intermediate. The released aldehyde is then substrate for a Knoevenagel condensation by the hydrolyase poxO followed by an oxidation at the 5-position of the pyrrolidone ring. The presence of the olefin from the amino acid building block allows for migration of the substituted allyl group to occur. This allylic transposition reaction takes place in a conjugate addition, semipinacol-like fashion to yield a succinimide intermediate. Iterative two-electron oxidations of the C7 methyl of the succinimide intermediate to the carboxylic acid can be catalyzed by one of two remaining cytochrome P450 monooxygenasess poxC or poxD to yield oxaleimide A. Subsequent oxidation yields the maleimide scaffold oxaleimide I. Both oxaleimide A and oxaleimide I can undergo oxidative modifications in the decalin ring to yield the series of products oxaleimides B to H. The chain is Hydrolyase poxO from Penicillium oxalicum (strain 114-2 / CGMCC 5302) (Penicillium decumbens).